The primary structure comprises 204 residues: Large ribosomal subunit protein bL25 (204 aa).

This sequence belongs to the bacterial ribosomal protein bL25 family. CTC subfamily. Part of the 50S ribosomal subunit; part of the 5S rRNA/L5/L18/L25 subcomplex. Contacts the 5S rRNA. Binds to the 5S rRNA independently of L5 and L18.

In terms of biological role, this is one of the proteins that binds to the 5S RNA in the ribosome where it forms part of the central protuberance. This is Large ribosomal subunit protein bL25 from Pseudoalteromonas translucida (strain TAC 125).